A 262-amino-acid polypeptide reads, in one-letter code: 1-(5-phosphoribosyl)-5-[(5-phosphoribosylamino)methylideneamino] imidazole-4-carboxamide isomerase (262 aa).

The Proton acceptor role is filled by D8. D130 acts as the Proton donor in catalysis.

This sequence belongs to the HisA/HisF family.

It localises to the cytoplasm. The enzyme catalyses 1-(5-phospho-beta-D-ribosyl)-5-[(5-phospho-beta-D-ribosylamino)methylideneamino]imidazole-4-carboxamide = 5-[(5-phospho-1-deoxy-D-ribulos-1-ylimino)methylamino]-1-(5-phospho-beta-D-ribosyl)imidazole-4-carboxamide. It participates in amino-acid biosynthesis; L-histidine biosynthesis; L-histidine from 5-phospho-alpha-D-ribose 1-diphosphate: step 4/9. The polypeptide is 1-(5-phosphoribosyl)-5-[(5-phosphoribosylamino)methylideneamino] imidazole-4-carboxamide isomerase (Chloroherpeton thalassium (strain ATCC 35110 / GB-78)).